We begin with the raw amino-acid sequence, 440 residues long: Ribulose bisphosphate carboxylase large chain (440 aa).

Lysine 4 carries the post-translational modification N6,N6,N6-trimethyllysine. Positions 113 and 163 each coordinate substrate. Lysine 165 functions as the Proton acceptor in the catalytic mechanism. Lysine 167 is a substrate binding site. Lysine 191, aspartate 193, and glutamate 194 together coordinate Mg(2+). Residue lysine 191 is modified to N6-carboxylysine. Residue histidine 284 is the Proton acceptor of the active site. Residues arginine 285, histidine 317, and serine 369 each coordinate substrate.

It belongs to the RuBisCO large chain family. Type I subfamily. Heterohexadecamer of 8 large chains and 8 small chains; disulfide-linked. The disulfide link is formed within the large subunit homodimers. It depends on Mg(2+) as a cofactor. In terms of processing, the disulfide bond which can form in the large chain dimeric partners within the hexadecamer appears to be associated with oxidative stress and protein turnover.

The protein resides in the plastid. The protein localises to the chloroplast. It catalyses the reaction 2 (2R)-3-phosphoglycerate + 2 H(+) = D-ribulose 1,5-bisphosphate + CO2 + H2O. The catalysed reaction is D-ribulose 1,5-bisphosphate + O2 = 2-phosphoglycolate + (2R)-3-phosphoglycerate + 2 H(+). In terms of biological role, ruBisCO catalyzes two reactions: the carboxylation of D-ribulose 1,5-bisphosphate, the primary event in carbon dioxide fixation, as well as the oxidative fragmentation of the pentose substrate in the photorespiration process. Both reactions occur simultaneously and in competition at the same active site. The chain is Ribulose bisphosphate carboxylase large chain from Pteris vittata (Chinese ladder brake).